We begin with the raw amino-acid sequence, 466 residues long: Soluble pyridine nucleotide transhydrogenase (466 aa).

Residue 36-45 participates in FAD binding; that stretch reads ERYQNVGGGC.

The protein belongs to the class-I pyridine nucleotide-disulfide oxidoreductase family. Requires FAD as cofactor.

The protein resides in the cytoplasm. The catalysed reaction is NAD(+) + NADPH = NADH + NADP(+). Its function is as follows. Conversion of NADPH, generated by peripheral catabolic pathways, to NADH, which can enter the respiratory chain for energy generation. The protein is Soluble pyridine nucleotide transhydrogenase of Shigella boydii serotype 18 (strain CDC 3083-94 / BS512).